A 351-amino-acid polypeptide reads, in one-letter code: sn-1 oleoyl-lipid 12-desaturase (351 aa).

A disordered region spans residues 1–20 (MTLSIVKSEDSSSRPSAVPS). Helical transmembrane passes span 44–62 (AWMT…WLGI) and 68–88 (FLLP…FVIG). A Histidine box-1 motif is present at residues 89 to 93 (HDCGH). The helical transmembrane segment at 100–120 (VWVNDWVGHILFLPIIYPFHS) threads the bilayer. The Histidine box-2 signature appears at 125–129 (HNQHH). A run of 2 helical transmembrane segments spans residues 199-219 (LLVI…IGVW) and 221-241 (FVKF…TFTL). The short motif at 289 to 293 (HHVTT) is the Histidine box-3 element.

This sequence belongs to the fatty acid desaturase type 2 family. Fe(2+) serves as cofactor.

It localises to the cellular thylakoid membrane. It carries out the reaction a 1-[(9Z)-octadecenoyl]-2-acyl-glycerolipid + 2 reduced [2Fe-2S]-[ferredoxin] + O2 + 2 H(+) = a 1-[(9Z,12Z)-octadecdienoyl]-2-acyl-glycerolipid + 2 oxidized [2Fe-2S]-[ferredoxin] + 2 H2O. It functions in the pathway lipid metabolism; polyunsaturated fatty acid biosynthesis. In terms of biological role, desaturase involved in fatty acid biosynthesis. Introduces a double bond at carbon 12 of oleoyl groups (18:1) attached to the sn-1 position of the glycerol moiety of membrane glycerolipids. This chain is sn-1 oleoyl-lipid 12-desaturase, found in Arthrospira platensis (Spirulina platensis).